The primary structure comprises 102 residues: Small ribosomal subunit protein uS10 (102 aa).

This sequence belongs to the universal ribosomal protein uS10 family. In terms of assembly, part of the 30S ribosomal subunit.

Functionally, involved in the binding of tRNA to the ribosomes. The chain is Small ribosomal subunit protein uS10 from Methylobacterium nodulans (strain LMG 21967 / CNCM I-2342 / ORS 2060).